The following is a 126-amino-acid chain: Histone H2B type 1-N (126 aa).

The segment covering 1–12 (MPEPSKSAPAPK) has biased composition (low complexity). A disordered region spans residues 1–36 (MPEPSKSAPAPKKGSKKAVTKAQKKDGKKRKRSRKE). P2 carries the post-translational modification N-acetylproline. E3 carries the post-translational modification ADP-ribosyl glutamic acid. The residue at position 6 (K6) is an N6-(2-hydroxyisobutyryl)lysine; alternate. K6 bears the N6-(beta-hydroxybutyryl)lysine; alternate mark. At K6 the chain carries N6-acetyllysine; alternate. K6 carries the N6-butyryllysine; alternate modification. Position 6 is an N6-crotonyllysine; alternate (K6). K6 carries the post-translational modification N6-lactoyllysine; alternate. K6 participates in a covalent cross-link: Glycyl lysine isopeptide (Lys-Gly) (interchain with G-Cter in SUMO2); alternate. An ADP-ribosylserine modification is found at S7. The residue at position 12 (K12) is an N6-(beta-hydroxybutyryl)lysine; alternate. K12 and K13 each carry N6-acetyllysine; alternate. K12 and K13 each carry N6-crotonyllysine; alternate. K12 carries the post-translational modification N6-lactoyllysine; alternate. Position 13 is an N6-(2-hydroxyisobutyryl)lysine; alternate (K13). The residue at position 15 (S15) is a Phosphoserine; by STK4/MST1. 4 positions are modified to N6-acetyllysine; alternate: K16, K17, K21, and K24. An N6-crotonyllysine; alternate mark is found at K16, K17, K21, and K24. N6-lactoyllysine; alternate is present on residues K16, K17, K21, and K24. K17 and K21 each carry N6-(beta-hydroxybutyryl)lysine; alternate. At K17 the chain carries N6-glutaryllysine; alternate. K21 and K24 each carry N6-(2-hydroxyisobutyryl)lysine; alternate. K21 bears the N6-butyryllysine; alternate mark. K21 participates in a covalent cross-link: Glycyl lysine isopeptide (Lys-Gly) (interchain with G-Cter in SUMO2); alternate. N6-(2-hydroxyisobutyryl)lysine is present on K25. K35 is subject to N6-(2-hydroxyisobutyryl)lysine; alternate. N6-(beta-hydroxybutyryl)lysine; alternate is present on K35. An N6-crotonyllysine; alternate modification is found at K35. K35 carries the post-translational modification N6-glutaryllysine; alternate. An N6-succinyllysine; alternate modification is found at K35. K35 participates in a covalent cross-link: Glycyl lysine isopeptide (Lys-Gly) (interchain with G-Cter in ubiquitin); alternate. PolyADP-ribosyl glutamic acid is present on E36. The residue at position 37 (S37) is a Phosphoserine; by AMPK. 3 positions are modified to N6-(2-hydroxyisobutyryl)lysine; alternate: K44, K47, and K58. N6-lactoyllysine; alternate is present on K44. Residues K44 and K47 each carry the N6-glutaryllysine; alternate modification. Residue K47 is modified to N6-methyllysine; alternate. K58 carries the post-translational modification N6,N6-dimethyllysine; alternate. Dimethylated arginine is present on R80. The residue at position 86 (K86) is an N6-(2-hydroxyisobutyryl)lysine; alternate. At K86 the chain carries N6-(beta-hydroxybutyryl)lysine; alternate. K86 carries the N6-acetyllysine; alternate modification. An N6-lactoyllysine; alternate modification is found at K86. Residue K86 is modified to N6,N6,N6-trimethyllysine; alternate. R87 and R93 each carry omega-N-methylarginine. Residue K109 is modified to N6-(2-hydroxyisobutyryl)lysine; alternate. Residue K109 is modified to N6-lactoyllysine; alternate. K109 is modified (N6-glutaryllysine; alternate). K109 carries the N6-methyllysine; alternate modification. Residue S113 is glycosylated (O-linked (GlcNAc) serine). A Phosphothreonine modification is found at T116. Residues K117 and K121 each carry the N6-(2-hydroxyisobutyryl)lysine; alternate modification. N6-(beta-hydroxybutyryl)lysine; alternate occurs at positions 117 and 121. 2 positions are modified to N6-lactoyllysine; alternate: K117 and K121. K117 and K121 each carry N6-glutaryllysine; alternate. Residues K117 and K121 each carry the N6-succinyllysine; alternate modification. An N6-malonyllysine; alternate modification is found at K117. K117 bears the N6-methylated lysine; alternate mark. Residue K121 forms a Glycyl lysine isopeptide (Lys-Gly) (interchain with G-Cter in ubiquitin); alternate linkage.

This sequence belongs to the histone H2B family. As to quaternary structure, the nucleosome is a histone octamer containing two molecules each of H2A, H2B, H3 and H4 assembled in one H3-H4 heterotetramer and two H2A-H2B heterodimers. The octamer wraps approximately 147 bp of DNA. Monoubiquitination at Lys-35 (H2BK34Ub) by the MSL1/MSL2 dimer is required for histone H3 'Lys-4' (H3K4me) and 'Lys-79' (H3K79me) methylation and transcription activation at specific gene loci, such as HOXA9 and MEIS1 loci. Similarly, monoubiquitination at Lys-121 (H2BK120Ub) by the RNF20/40 complex gives a specific tag for epigenetic transcriptional activation and is also prerequisite for histone H3 'Lys-4' and 'Lys-79' methylation. It also functions cooperatively with the FACT dimer to stimulate elongation by RNA polymerase II. H2BK120Ub also acts as a regulator of mRNA splicing: deubiquitination by USP49 is required for efficient cotranscriptional splicing of a large set of exons. In terms of processing, phosphorylation at Ser-37 (H2BS36ph) by AMPK in response to stress promotes transcription. Phosphorylated on Ser-15 (H2BS14ph) by STK4/MST1 during apoptosis; which facilitates apoptotic chromatin condensation. Also phosphorylated on Ser-15 in response to DNA double strand breaks (DSBs), and in correlation with somatic hypermutation and immunoglobulin class-switch recombination. Post-translationally, glcNAcylation at Ser-113 promotes monoubiquitination of Lys-121. It fluctuates in response to extracellular glucose, and associates with transcribed genes. ADP-ribosylated by PARP1 or PARP2 on Ser-7 (H2BS6ADPr) in response to DNA damage. H2BS6ADPr promotes recruitment of CHD1L. Mono-ADP-ribosylated on Glu-3 (H2BE2ADPr) by PARP3 in response to single-strand breaks. Poly ADP-ribosylation on Glu-36 (H2BE35ADPr) by PARP1 regulates adipogenesis: it inhibits phosphorylation at Ser-37 (H2BS36ph), thereby blocking expression of pro-adipogenetic genes. In terms of processing, crotonylation (Kcr) is specifically present in male germ cells and marks testis-specific genes in post-meiotic cells, including X-linked genes that escape sex chromosome inactivation in haploid cells. Crotonylation marks active promoters and enhancers and confers resistance to transcriptional repressors. It is also associated with post-meiotically activated genes on autosomes. Post-translationally, lactylated in macrophages by EP300/P300 by using lactoyl-CoA directly derived from endogenous or exogenous lactate, leading to stimulates gene transcription.

Its subcellular location is the nucleus. It is found in the chromosome. Its function is as follows. Core component of nucleosome. Nucleosomes wrap and compact DNA into chromatin, limiting DNA accessibility to the cellular machineries which require DNA as a template. Histones thereby play a central role in transcription regulation, DNA repair, DNA replication and chromosomal stability. DNA accessibility is regulated via a complex set of post-translational modifications of histones, also called histone code, and nucleosome remodeling. The sequence is that of Histone H2B type 1-N from Homo sapiens (Human).